A 63-amino-acid chain; its full sequence is Small ribosomal subunit protein bS21 (63 aa).

The protein belongs to the bacterial ribosomal protein bS21 family.

The chain is Small ribosomal subunit protein bS21 from Parabacteroides distasonis (strain ATCC 8503 / DSM 20701 / CIP 104284 / JCM 5825 / NCTC 11152).